The following is a 120-amino-acid chain: Large ribosomal subunit protein uL18 (120 aa).

Positions 1 to 10 (MKLTRRESKE) are enriched in basic and acidic residues. Positions 1 to 26 (MKLTRRESKERRHRRVRGKVQGSPER) are disordered.

This sequence belongs to the universal ribosomal protein uL18 family. As to quaternary structure, part of the 50S ribosomal subunit; part of the 5S rRNA/L5/L18/L25 subcomplex. Contacts the 5S and 23S rRNAs.

In terms of biological role, this is one of the proteins that bind and probably mediate the attachment of the 5S RNA into the large ribosomal subunit, where it forms part of the central protuberance. The protein is Large ribosomal subunit protein uL18 of Nostoc sp. (strain PCC 7120 / SAG 25.82 / UTEX 2576).